The primary structure comprises 698 residues: MPSTPYDLVQDDQDLRVPLHAEQAFFHGITFQAKFVGWEEVPRPNTRAEIVQAMRRIRYECKVQNLKKRKVTIHISVNGVRVVLKKRRRKKKNWTNDPEDIELLNHPIYRIFYVSHDSSDLKIFSYIARDASTDTFKCSVFKSHKKSQAMRIVRTVGQAFEVCHKFNLHKNSLEPNDERSDISSSELLDVEQISEQQLSEDGERGGGDNETPKKEHLAITPDLNHTQPQRPNHLDIMPSHSSLRKSNSLLCDVDDKSPGSPSSPRSEITQLKDQLEAQALQTRQALGQLMLVREQLISETNARIEAQARTQQLLQQNRELLEHLASLGAYNEQQTAGLTSANIGMAPQQSQLQMLLQATSNNNNLATINQQISNLGSINQQLTSLSHQLSGLNQQSQHLQNLQQQQQQQQQQQQQQTQAAPTAATPPPAAGGSSPYPSMSALQSISNQLQQQQQQQQQDALSKDLFQVNQELLNRLQALNLNANPGQSQPTPSATAHNSFFYVNPLSCTPATPNNNAGGAGGFNFLTSPAATGTLTPSPLGTMNRNSFAGSSSLNEDIRLSIEQNLNNLEEQLKAAVSNGNLAGLACGGSTSTRDTSRSSSTLDSPSSPRLRSSNNNISPGSSNGNQNHNNNSNSNSSSSRETRFNTVLLRVTDEAGHQRKLSATPSFITRSTSEKVPNRSQMMSQVQRTTWARHTTK.

The region spanning 25–194 (FFHGITFQAK…SELLDVEQIS (170 aa)) is the PID domain. The segment at 191 to 240 (EQISEQQLSEDGERGGGDNETPKKEHLAITPDLNHTQPQRPNHLDIMPSH) is disordered. Residues 201–217 (DGERGGGDNETPKKEHL) show a composition bias toward basic and acidic residues. 3 coiled-coil regions span residues 265–327 (RSEI…LASL), 379–484 (NQQL…LNAN), and 554–583 (LNEDIRLSIEQNLNNLEEQLKAAVSNGNLA). Residues 396–423 (SQHLQNLQQQQQQQQQQQQQQTQAAPTA) are compositionally biased toward low complexity. A disordered region spans residues 396-460 (SQHLQNLQQQ…QQQQQQQQDA (65 aa)). Polar residues predominate over residues 436-447 (YPSMSALQSISN). A compositionally biased stretch (low complexity) spans 448–458 (QLQQQQQQQQQ). A disordered region spans residues 588-698 (GGSTSTRDTS…RTTWARHTTK (111 aa)). Residues 590–640 (STSTRDTSRSSSTLDSPSSPRLRSSNNNISPGSSNGNQNHNNNSNSNSSSS) are compositionally biased toward low complexity. 2 stretches are compositionally biased toward polar residues: residues 662–672 (LSATPSFITRS) and 679–698 (NRSQMMSQVQRTTWARHTTK).

In terms of tissue distribution, expressed at higher level in wing imaginal disk.

Putative adapter protein. The polypeptide is Capon-like protein (Drosophila melanogaster (Fruit fly)).